A 103-amino-acid polypeptide reads, in one-letter code: UPF0473 protein SSA_2239 (103 aa).

The protein belongs to the UPF0473 family.

The protein is UPF0473 protein SSA_2239 of Streptococcus sanguinis (strain SK36).